A 67-amino-acid chain; its full sequence is DNA-directed RNA polymerase subunit omega (67 aa).

It belongs to the RNA polymerase subunit omega family. In terms of assembly, the RNAP catalytic core consists of 2 alpha, 1 beta, 1 beta' and 1 omega subunit. When a sigma factor is associated with the core the holoenzyme is formed, which can initiate transcription.

The enzyme catalyses RNA(n) + a ribonucleoside 5'-triphosphate = RNA(n+1) + diphosphate. Its function is as follows. Promotes RNA polymerase assembly. Latches the N- and C-terminal regions of the beta' subunit thereby facilitating its interaction with the beta and alpha subunits. In Leptothrix cholodnii (strain ATCC 51168 / LMG 8142 / SP-6) (Leptothrix discophora (strain SP-6)), this protein is DNA-directed RNA polymerase subunit omega.